Consider the following 2464-residue polypeptide: Nonribosomal peptide synthetase NPS2 (2464 aa).

The tract at residues 275–670 (DDHHPGTSQP…GRIDTQIKLR (396 aa)) is adenylation 1. Residues 814–888 (TKAEGQLLEI…QIAKALDASS (75 aa)) enclose the Carrier 1 domain. Residue serine 848 is modified to O-(pantetheine 4'-phosphoryl)serine. The interval 924 to 1325 (IYPPFPLQEG…EGLALDLAQG (402 aa)) is condensation 1. Residues 1364-1437 (EDLLLRLRKI…RMAASAGKKI (74 aa)) form the Carrier 2 domain. The residue at position 1398 (serine 1398) is an O-(pantetheine 4'-phosphoryl)serine. Residues 1479–1887 (DVFPVTTLQA…LRVLVDDLDA (409 aa)) form a condensation 2 region. Residues 1917-1993 (SSWDEKSSTL…DLVMRAGAED (77 aa)) form the Carrier 3 domain. At serine 1954 the chain carries O-(pantetheine 4'-phosphoryl)serine. Residues 2047-2340 (GGSRYQHVFG…ATQIQDDLRE (294 aa)) form a condensation 3 region.

The protein belongs to the NRP synthetase family.

It participates in siderophore biosynthesis. Functionally, nonribosomal peptide synthetase; part of the siderophore basidioferrin biosynthetic pathway. The biosynthesis of basidioferrin depends on the hydroxylation of ornithine to N(5)-hydroxyornithine, catalyzed by the monooxygenase SMO1. The second step, the acylation of N(5)-hydroxy-L-ornithine is catalyzed by a not yet identified N-acyltransferase. Finally, assembly of basidioferrin is catalyzed by the nonribosomal peptide synthase (NRPS) NPS2 via amide bond formation between three L-AHO molecules to release the linear L-AHO trimer. N-5-acetyl-N-5-hydroxy-L-ornithine (L-AHO) and N-5-cis-anhydromevalonyl-N-5-hydroxy-L-ornithine (L-AMHO) are accepted as the substrates by the NPS2 adenylation (A) domain, but only L-AHO is trimerized. The chain is Nonribosomal peptide synthetase NPS2 from Ceriporiopsis subvermispora (strain B) (White-rot fungus).